Reading from the N-terminus, the 515-residue chain is MRNIKFFDTTLRDGEQSAGVNLNLQEKLEIARQLERLRVDIIEAGFPASSKGDFEAVKQIAETVRTCSVTGLSRSVRSDIDAAWEALKGGAEPRLHLFIATSPIHMVHKLRMTPEQVIEAAVEAVKYAKRFFPIVQWSAEDACRSELPFLAKIVAEVIKAGASVINIPDTVGYITPKEYGEIFLYLQNNVQNIENVSLSAHCHDDLGMAVVNSLSAIEHGATQVECTINGIGERAGNAALEEIAVALHIRKDYYQVETRLNLQEIKRTSNLVSKLTGVVVPPNKAVVGKNAFAHESGIHQDGVLKEKTTYEIISPELVGVPSNSMVLGKNSGRHALRYRVEELGYTLSDEEINQLFVRFKELADKKKDITDDDLIALIFEEKFDHFKDFYQLSSIQVQYGTNQIPTAVVVLKYGKGNEIQEAATGSGSVYALYNTLERCFQTEVTLLDYRIESVGGGRDALAQVFVKVRVRDVETSGRGTAQDVLEASAKAYINAMNRVFMIEAMRAENEKVATS.

Positions 4 to 266 constitute a Pyruvate carboxyltransferase domain; that stretch reads IKFFDTTLRD…ETRLNLQEIK (263 aa). Positions 13, 201, 203, and 237 each coordinate Mn(2+). The regulatory domain stretch occupies residues 391–515; it reads QLSSIQVQYG…RAENEKVATS (125 aa).

Belongs to the alpha-IPM synthase/homocitrate synthase family. LeuA type 1 subfamily. In terms of assembly, homodimer. It depends on Mn(2+) as a cofactor.

It is found in the cytoplasm. The catalysed reaction is 3-methyl-2-oxobutanoate + acetyl-CoA + H2O = (2S)-2-isopropylmalate + CoA + H(+). It functions in the pathway amino-acid biosynthesis; L-leucine biosynthesis; L-leucine from 3-methyl-2-oxobutanoate: step 1/4. Functionally, catalyzes the condensation of the acetyl group of acetyl-CoA with 3-methyl-2-oxobutanoate (2-ketoisovalerate) to form 3-carboxy-3-hydroxy-4-methylpentanoate (2-isopropylmalate). In Geobacillus stearothermophilus (Bacillus stearothermophilus), this protein is 2-isopropylmalate synthase.